The sequence spans 136 residues: uncharacterized protein (136 aa).

The protein belongs to the MG439/MG440 family.

This is an uncharacterized protein from Mycoplasma pneumoniae (strain ATCC 29342 / M129 / Subtype 1) (Mycoplasmoides pneumoniae).